Here is a 490-residue protein sequence, read N- to C-terminus: Apocarotenoid-15,15'-oxygenase (490 aa).

H183 is a Fe cation binding site. S206 lines the substrate pocket. H238 lines the Fe cation pocket. F303 provides a ligand contact to substrate. The Fe cation site is built by H304 and H484.

It belongs to the carotenoid oxygenase family. It depends on Fe(2+) as a cofactor.

The catalysed reaction is all-trans-8'-apo-beta-carotenal + O2 = (2E,4E,6E)-2,6-dimethylocta-2,4,6-trienedial + all-trans-retinal. Cleaves a number of carotenals and carotenols in the all-trans configuration at the 15-15' double bond producing retinal or retinol, respectively. Also shows activity toward lycopenals and the corresponding alcohols. Does not cleave beta-carotene or lycopene. This is Apocarotenoid-15,15'-oxygenase from Synechocystis sp. (strain ATCC 27184 / PCC 6803 / Kazusa).